A 131-amino-acid chain; its full sequence is Global transcriptional regulator Spx (131 aa).

Cys10 and Cys13 are oxidised to a cystine.

The protein belongs to the ArsC family. Spx subfamily. Interacts with the C-terminal domain of the alpha subunit of the RNAP.

It is found in the cytoplasm. Functionally, global transcriptional regulator that plays a key role in stress response and exerts either positive or negative regulation of genes. Acts by interacting with the C-terminal domain of the alpha subunit of the RNA polymerase (RNAP). This interaction can enhance binding of RNAP to the promoter region of target genes and stimulate their transcription, or block interaction of RNAP with activator. The chain is Global transcriptional regulator Spx from Staphylococcus saprophyticus subsp. saprophyticus (strain ATCC 15305 / DSM 20229 / NCIMB 8711 / NCTC 7292 / S-41).